A 101-amino-acid chain; its full sequence is Small ribosomal subunit protein uS10 (101 aa).

It belongs to the universal ribosomal protein uS10 family. Part of the 30S ribosomal subunit.

Functionally, involved in the binding of tRNA to the ribosomes. In Corynebacterium urealyticum (strain ATCC 43042 / DSM 7109), this protein is Small ribosomal subunit protein uS10.